Here is a 192-residue protein sequence, read N- to C-terminus: Fe/S biogenesis protein NfuA (192 aa).

[4Fe-4S] cluster is bound by residues Cys-150 and Cys-153.

Belongs to the NfuA family. As to quaternary structure, homodimer. The cofactor is [4Fe-4S] cluster.

Its function is as follows. Involved in iron-sulfur cluster biogenesis. Binds a 4Fe-4S cluster, can transfer this cluster to apoproteins, and thereby intervenes in the maturation of Fe/S proteins. Could also act as a scaffold/chaperone for damaged Fe/S proteins. The polypeptide is Fe/S biogenesis protein NfuA (Vesicomyosocius okutanii subsp. Calyptogena okutanii (strain HA)).